The following is a 397-amino-acid chain: Subtilisin-like serine protease Pen c 1 (397 aa).

Residues 1 to 19 (MGFLKVLATSLATLAVVDA) form the signal peptide. A propeptide spans 20–115 (GTLLTASNTD…IEPDMIVNAT (96 aa)) (removed in mature form). Positions 35-113 (SYIVVMNDDV…KYIEPDMIVN (79 aa)) constitute an Inhibitor I9 domain. Positions 125 to 397 (SWGLARISSK…SKLLYNGINV (273 aa)) constitute a Peptidase S8 domain. Residues Asp157, His188, and Ser343 each act as charge relay system in the active site.

It belongs to the peptidase S8 family.

It is found in the secreted. Its activity is regulated as follows. Inhibited by 0.1 mM diisopropyl fluorophosphate (DFP), phenylmethanesulfonyl fluoride (PMSF), chymostatin and elastatinal. Not inhibited by N-alpha-p-tosyl-L-lysine chloromethylketone (TLCK), N-tosyl-L-phenylalanyl chloromethyl ketone (TPCK) or N-carbobenzoxy-L-phenylalanine chloromethylketone (ZPCK). In terms of biological role, serine protease. Hydrolyzes azocasein. Cleaves peptide bonds of the oxidized insulin B chain preferably at 15-Leu-|-Tyr-16, but also at 4-Gln-|-His-5 and 24-Phe-|-Phe-25, and to a lesser extent at 5-His-|-Leu-6 and 25-Phe-|-Tyr-26. Hydrolyzes amide bonds between amino acids and 7-amino-4-methylcoumarin (AMC) in vitro. The chain is Subtilisin-like serine protease Pen c 1 from Penicillium citrinum.